A 211-amino-acid polypeptide reads, in one-letter code: Large ribosomal subunit protein bL25 (211 aa).

The disordered stretch occupies residues 186 to 211 (GRALQSMDAAESAVEQPGEQPATAAG).

This sequence belongs to the bacterial ribosomal protein bL25 family. CTC subfamily. Part of the 50S ribosomal subunit; part of the 5S rRNA/L5/L18/L25 subcomplex. Contacts the 5S rRNA. Binds to the 5S rRNA independently of L5 and L18.

Functionally, this is one of the proteins that binds to the 5S RNA in the ribosome where it forms part of the central protuberance. In Gloeobacter violaceus (strain ATCC 29082 / PCC 7421), this protein is Large ribosomal subunit protein bL25.